The sequence spans 200 residues: MAKFIQHIGLVAPLDAANVDTDAIIPKQFLQKVTRTGFGQHLFNDWRFLDDAGKVPNPDFVLNLPRYQGATILLARENFGCGSSREHAPWALTDFGFKVVIAPSFADIFYGNAFNNQLLPVTLSEADIDTLFQLVKENEGIEFVVDLEQQTVNAGGKSYAFEIDPFRRHCMINGLDSIGLTLQHEHNISAYEKQQPEFLR.

Belongs to the LeuD family. LeuD type 1 subfamily. In terms of assembly, heterodimer of LeuC and LeuD.

It carries out the reaction (2R,3S)-3-isopropylmalate = (2S)-2-isopropylmalate. It functions in the pathway amino-acid biosynthesis; L-leucine biosynthesis; L-leucine from 3-methyl-2-oxobutanoate: step 2/4. In terms of biological role, catalyzes the isomerization between 2-isopropylmalate and 3-isopropylmalate, via the formation of 2-isopropylmaleate. The sequence is that of 3-isopropylmalate dehydratase small subunit from Yersinia pseudotuberculosis serotype I (strain IP32953).